We begin with the raw amino-acid sequence, 248 residues long: Ribosomal RNA small subunit methyltransferase J (248 aa).

S-adenosyl-L-methionine-binding positions include 98–99 (RD), 114–115 (ER), 150–151 (SS), and aspartate 168.

Belongs to the methyltransferase superfamily. RsmJ family.

The protein resides in the cytoplasm. The enzyme catalyses guanosine(1516) in 16S rRNA + S-adenosyl-L-methionine = N(2)-methylguanosine(1516) in 16S rRNA + S-adenosyl-L-homocysteine + H(+). Specifically methylates the guanosine in position 1516 of 16S rRNA. This Shewanella denitrificans (strain OS217 / ATCC BAA-1090 / DSM 15013) protein is Ribosomal RNA small subunit methyltransferase J.